The sequence spans 109 residues: Large ribosomal subunit protein uL24 (109 aa).

It belongs to the universal ribosomal protein uL24 family. As to quaternary structure, part of the 50S ribosomal subunit.

Its function is as follows. One of two assembly initiator proteins, it binds directly to the 5'-end of the 23S rRNA, where it nucleates assembly of the 50S subunit. In terms of biological role, one of the proteins that surrounds the polypeptide exit tunnel on the outside of the subunit. The sequence is that of Large ribosomal subunit protein uL24 from Legionella pneumophila (strain Corby).